Consider the following 208-residue polypeptide: Large ribosomal subunit protein uL4 (208 aa).

Residues 49-78 (HKAKTRAEVRGGGKKPFRQKGTGNARQGST) form a disordered region. The segment covering 69–78 (GTGNARQGST) has biased composition (polar residues).

The protein belongs to the universal ribosomal protein uL4 family. As to quaternary structure, part of the 50S ribosomal subunit.

Functionally, one of the primary rRNA binding proteins, this protein initially binds near the 5'-end of the 23S rRNA. It is important during the early stages of 50S assembly. It makes multiple contacts with different domains of the 23S rRNA in the assembled 50S subunit and ribosome. In terms of biological role, forms part of the polypeptide exit tunnel. The chain is Large ribosomal subunit protein uL4 from Chlorobaculum tepidum (strain ATCC 49652 / DSM 12025 / NBRC 103806 / TLS) (Chlorobium tepidum).